Consider the following 127-residue polypeptide: Histidine-containing phosphotransfer protein 4 (127 aa).

The 96-residue stretch at 27-122 (NPNFVEEVSA…STLRKKLEHY (96 aa)) folds into the HPt domain. H68 carries the phosphohistidine modification.

In terms of assembly, interacts with the B-type response regulators ARR1 and ARR2. Two-component system major event consists of a His-to-Asp phosphorelay between a sensor histidine kinase (HK) and a response regulator (RR). In plants, the His-to-Asp phosphorelay involves an additional intermediate named Histidine-containing phosphotransfer protein (HPt). This multistep phosphorelay consists of a His-Asp-His-Asp sequential transfer of a phosphate group between first a His and an Asp of the HK protein, followed by the transfer to a conserved His of the HPt protein and finally the transfer to an Asp in the receiver domain of the RR protein. In terms of tissue distribution, predominantly expressed in aerial parts of the plant.

Its subcellular location is the cytoplasm. The protein resides in the cytosol. It localises to the nucleus. In terms of biological role, functions as a two-component phosphorelay mediator between cytokinin sensor histidine kinases and response regulators (B-type ARRs). Plays an important role in propagating cytokinin signal transduction through the multistep His-to-Asp phosphorelay. This is Histidine-containing phosphotransfer protein 4 (AHP4) from Arabidopsis thaliana (Mouse-ear cress).